We begin with the raw amino-acid sequence, 190 residues long: Lipid A acyltransferase PagP (190 aa).

Positions 1 to 18 are cleaved as a signal peptide; sequence MKRLISCLTIICALNASA. Residues H60, D103, and S104 contribute to the active site.

Belongs to the lipid A palmitoyltransferase family. Homodimer.

Its subcellular location is the cell outer membrane. It catalyses the reaction a lipid A + a 1,2-diacyl-sn-glycero-3-phosphocholine = a hepta-acyl lipid A + a 2-acyl-sn-glycero-3-phosphocholine. The catalysed reaction is a lipid IVA + a 1,2-diacyl-sn-glycero-3-phosphocholine = a lipid IVB + a 2-acyl-sn-glycero-3-phosphocholine. The enzyme catalyses a lipid IIA + a 1,2-diacyl-sn-glycero-3-phosphocholine = a lipid IIB + a 2-acyl-sn-glycero-3-phosphocholine. In terms of biological role, transfers a fatty acid residue from the sn-1 position of a phospholipid to the N-linked hydroxyfatty acid chain on the proximal unit of lipid A or its precursors. The sequence is that of Lipid A acyltransferase PagP from Legionella pneumophila serogroup 1 (strain 2300/99 Alcoy).